A 383-amino-acid chain; its full sequence is 8-amino-7-oxononanoate synthase (383 aa).

Arg-20 contributes to the substrate binding site. Pyridoxal 5'-phosphate is bound at residue 107–108 (GY). Residue His-132 coordinates substrate. Ser-178, His-206, and Thr-233 together coordinate pyridoxal 5'-phosphate. Lys-236 is modified (N6-(pyridoxal phosphate)lysine). Thr-349 serves as a coordination point for substrate.

It belongs to the class-II pyridoxal-phosphate-dependent aminotransferase family. BioF subfamily. In terms of assembly, homodimer. Requires pyridoxal 5'-phosphate as cofactor.

It carries out the reaction 6-carboxyhexanoyl-[ACP] + L-alanine + H(+) = (8S)-8-amino-7-oxononanoate + holo-[ACP] + CO2. It functions in the pathway cofactor biosynthesis; biotin biosynthesis. Catalyzes the decarboxylative condensation of pimeloyl-[acyl-carrier protein] and L-alanine to produce 8-amino-7-oxononanoate (AON), [acyl-carrier protein], and carbon dioxide. This is 8-amino-7-oxononanoate synthase from Chromobacterium violaceum (strain ATCC 12472 / DSM 30191 / JCM 1249 / CCUG 213 / NBRC 12614 / NCIMB 9131 / NCTC 9757 / MK).